We begin with the raw amino-acid sequence, 388 residues long: Lipid-A-disaccharide synthase (388 aa).

Belongs to the LpxB family.

The catalysed reaction is a lipid X + a UDP-2-N,3-O-bis[(3R)-3-hydroxyacyl]-alpha-D-glucosamine = a lipid A disaccharide + UDP + H(+). Its pathway is bacterial outer membrane biogenesis; LPS lipid A biosynthesis. Functionally, condensation of UDP-2,3-diacylglucosamine and 2,3-diacylglucosamine-1-phosphate to form lipid A disaccharide, a precursor of lipid A, a phosphorylated glycolipid that anchors the lipopolysaccharide to the outer membrane of the cell. The polypeptide is Lipid-A-disaccharide synthase (Burkholderia pseudomallei (strain K96243)).